Here is a 243-residue protein sequence, read N- to C-terminus: Probable transcriptional regulatory protein BG0025 (243 aa).

Belongs to the TACO1 family.

The protein resides in the cytoplasm. This is Probable transcriptional regulatory protein BG0025 from Borrelia garinii subsp. bavariensis (strain ATCC BAA-2496 / DSM 23469 / PBi) (Borreliella bavariensis).